The primary structure comprises 119 residues: Large ribosomal subunit protein uL22c (119 aa).

This sequence belongs to the universal ribosomal protein uL22 family. As to quaternary structure, part of the 50S ribosomal subunit.

It is found in the plastid. It localises to the chloroplast. This protein binds specifically to 23S rRNA. Functionally, the globular domain of the protein is located near the polypeptide exit tunnel on the outside of the subunit, while an extended beta-hairpin is found that lines the wall of the exit tunnel in the center of the 70S ribosome. The sequence is that of Large ribosomal subunit protein uL22c (rpl22) from Angiopteris evecta (Mule's foot fern).